Consider the following 133-residue polypeptide: Small ribosomal subunit protein uS8 (133 aa).

It belongs to the universal ribosomal protein uS8 family. Part of the 30S ribosomal subunit. Contacts proteins S5 and S12.

In terms of biological role, one of the primary rRNA binding proteins, it binds directly to 16S rRNA central domain where it helps coordinate assembly of the platform of the 30S subunit. The chain is Small ribosomal subunit protein uS8 from Gloeothece citriformis (strain PCC 7424) (Cyanothece sp. (strain PCC 7424)).